Consider the following 1142-residue polypeptide: MAENKGGGEAESGGGGSGSAPVTAGAAGPTAQEAEPPLAAVLVEEEEEEGGRAGAEGGAAGPDDGGVAAASSSSAPAASVPAASVGSAVPGGAASTPAPAAAPAPAPAPAPAPAPAPAPAPAPGSSSGPPLGPPASLLDTCAVCQQSLQSRREAEPKLLPCLHSFCLRCLPEPERQLSVPIPGGSNGDVQQVGVIRCPVCRQECRQIDLVDNYFVKDTSEAPSSSDEKSEQVCTSCEDNASAVGFCVECGEWLCKTCIEAHQRVKFTKDHLIRKKEDVSESVGTSGQRPVFCPVHKQEQLKLFCETCDRLTCRDCQLLEHKEHRYQFLEEAFQNQKGAIENLLAKLLEKKNYVHFAATQVQNRIKEVNETNKRVEQEIKVAIFTLINEINKKGKSLLQQLENVTKERQMKLLQQQNDITGLSRQVKHVMNFTNWAIASGSSTALLYSKRLITFQLRHILKARCDPVPAANGAIRFHCDPTFWAKNVVNLGNLVIESKPAPGYTPNVVVGQVPPGTNHISKTPGQINLAQLRLQHMQQQVYAQKHQQLQQMRLQQPPAPIPTTTATTQQHPRQAAPQMLQQQPPRLISVQTMQRGNMNCGAFQAHQMRLAQNAARIPGIPRHSAPQYSMMQPHLQRQHSNPGHAGPFPVVSAHNPINPTSPTTATMANANRGPTSPSVTAIELIPSVTNPENLPSLPDIPPIQLEDAGSSSLDNLLSRYISGSHLPPQPTSTMNPSPGPSALSPGSSGLSNSHTPVRPPSTSSTGSRGSCGSSGRTAEKSAHSFKSDQVKVKQEPGTEEEICSFSGAVKQEKTEDGRRSACMLSSPESSLTPPLSTNLHLESELDTLTGLENHVKTEPTDISESCKQSGLSNLVNGKSPIRNLMHRSARIGGDGNSKDDDPNEDWCAVCQNGGDLLCCEKCPKVFHLTCHVPTLLSFPSGDWICTFCRDIGKPEVEYDCDNMQHSKKGKTAQGLSPVDQRKCERLLLYLYCHELSIEFQEPVPVSIPNYYKIIKKPMDLSTVKKKLQKKHSQHYQIPDDFVADVRLIFKNCERFNEMMKVVQVYADTQEINLKGDSEVAKAGKAVALYFEDKLSEIYSDRTFTPLPEFEQDEDDGEVTEDSDEDFIQPRRKRLKSDERPVHIK.

The segment covering 1–18 (MAENKGGGEAESGGGGSG) has biased composition (gly residues). The segment at 1–132 (MAENKGGGEA…PGSSSGPPLG (132 aa)) is disordered. The tract at residues 1–163 (MAENKGGGEA…AEPKLLPCLH (163 aa)) is necessary for E3 ubiquitin-protein ligase activity and repression of SMAD4 signaling and transcriptional repression. A compositionally biased stretch (low complexity) spans 19–42 (SAPVTAGAAGPTAQEAEPPLAAVL). Residues 52–64 (RAGAEGGAAGPDD) are compositionally biased toward gly residues. Residues 65-99 (GGVAAASSSSAPAASVPAASVGSAVPGGAASTPAP) show a composition bias toward low complexity. The span at 100–122 (AAAPAPAPAPAPAPAPAPAPAPA) shows a compositional bias: pro residues. An RING-type zinc finger spans residues 141–201 (CAVCQQSLQS…VGVIRCPVCR (61 aa)). 2 consecutive B box-type zinc fingers follow at residues 228 to 275 (KSEQ…IRKK) and 287 to 328 (QRPV…YQFL). The Zn(2+) site is built by cysteine 233, cysteine 236, cysteine 257, histidine 261, cysteine 292, histidine 295, cysteine 315, and histidine 320. The necessary for oligomerization stretch occupies residues 315–417 (CQLLEHKEHR…QMKLLQQQND (103 aa)). The stretch at 315-417 (CQLLEHKEHR…QMKLLQQQND (103 aa)) forms a coiled coil. Residues lysine 345, lysine 350, lysine 497, and lysine 520 each participate in a glycyl lysine isopeptide (Lys-Gly) (interchain with G-Cter in SUMO2) cross-link. Arginine 531 is subject to Asymmetric dimethylarginine; alternate. Arginine 531 is subject to Omega-N-methylarginine; alternate. Lysine 543 is covalently cross-linked (Glycyl lysine isopeptide (Lys-Gly) (interchain with G-Cter in SUMO2)). Arginine 551 carries the omega-N-methylarginine modification. Arginine 593 is modified (asymmetric dimethylarginine). An Asymmetric dimethylarginine; alternate modification is found at arginine 607. At arginine 607 the chain carries Omega-N-methylarginine; alternate. An asymmetric dimethylarginine mark is found at arginine 614 and arginine 620. Disordered stretches follow at residues 657 to 676 (PTSP…TSPS), 688 to 707 (NPEN…EDAG), and 718 to 834 (YISG…PPLS). Over residues 738 to 774 (PSALSPGSSGLSNSHTPVRPPSTSSTGSRGSCGSSGR) the composition is skewed to low complexity. Composition is skewed to basic and acidic residues over residues 775–794 (TAEK…KQEP) and 808–817 (KQEKTEDGRR). Lysine 778 and lysine 784 each carry N6-acetyllysine; alternate. Residues lysine 778 and lysine 784 each participate in a glycyl lysine isopeptide (Lys-Gly) (interchain with G-Cter in SUMO2); alternate cross-link. Residue lysine 789 forms a Glycyl lysine isopeptide (Lys-Gly) (interchain with G-Cter in SUMO2) linkage. Residues lysine 791 and lysine 808 each participate in a glycyl lysine isopeptide (Lys-Gly) (interchain with G-Cter in SUMO2); alternate cross-link. Glycyl lysine isopeptide (Lys-Gly) (interchain with G-Cter in SUMO1); alternate cross-links involve residues lysine 791 and lysine 808. Residue lysine 808 is modified to N6-acetyllysine; alternate. A Glycyl lysine isopeptide (Lys-Gly) (interchain with G-Cter in SUMO2) cross-link involves residue lysine 811. Phosphoserine is present on serine 818. Positions 822–834 (LSSPESSLTPPLS) are enriched in low complexity. At threonine 830 the chain carries Phosphothreonine. Lysine 876 participates in a covalent cross-link: Glycyl lysine isopeptide (Lys-Gly) (interchain with G-Cter in SUMO2). Serine 877 is modified (phosphoserine). The segment at 902–949 (EDWCAVCQNGGDLLCCEKCPKVFHLTCHVPTLLSFPSGDWICTFCRDI) adopts a PHD-type zinc-finger fold. At lysine 966 the chain carries N6-acetyllysine. At lysine 968 the chain carries N6-acetyllysine; alternate. Lysine 968 is covalently cross-linked (Glycyl lysine isopeptide (Lys-Gly) (interchain with G-Cter in SUMO2); alternate). A Bromo domain is found at 972 to 1095 (GLSPVDQRKC…LYFEDKLSEI (124 aa)). Residues lysine 1022 and lysine 1058 each participate in a glycyl lysine isopeptide (Lys-Gly) (interchain with G-Cter in SUMO2) cross-link. Threonine 1066 bears the Phosphothreonine mark. Residue lysine 1072 forms a Glycyl lysine isopeptide (Lys-Gly) (interchain with G-Cter in SUMO2) linkage. A disordered region spans residues 1103–1142 (PLPEFEQDEDDGEVTEDSDEDFIQPRRKRLKSDERPVHIK). Residues 1107 to 1124 (FEQDEDDGEVTEDSDEDF) show a composition bias toward acidic residues. Threonine 1117 carries the phosphothreonine modification. Serine 1120 carries the phosphoserine modification. Lysine 1133 is covalently cross-linked (Glycyl lysine isopeptide (Lys-Gly) (interchain with G-Cter in SUMO2)). Residues 1133–1142 (KSDERPVHIK) are compositionally biased toward basic and acidic residues. Position 1134 is a phosphoserine (serine 1134).

The protein belongs to the TRIM/RBCC family. As to quaternary structure, homooligomer and heterooligomer with TRIM24 and TRIM28 family members. Interacts with SMAD4 in unstimulated cells. Found in a complex with SMAD2 and SMAD3 upon addition of TGF-beta. Interacts with SMAD2 and SMAD3. Interacts with SMAD4 under basal and induced conditions and, upon TGF-beta signaling, with activated SMAD2. Forms a ternary complex with SMAD4 and SMAD2 upon TGF-beta signaling. Post-translationally, sumoylated with SUMO1. Ubiquitous with high level in testis.

The protein localises to the nucleus. It carries out the reaction S-ubiquitinyl-[E2 ubiquitin-conjugating enzyme]-L-cysteine + [acceptor protein]-L-lysine = [E2 ubiquitin-conjugating enzyme]-L-cysteine + N(6)-ubiquitinyl-[acceptor protein]-L-lysine.. The protein operates within protein modification; protein ubiquitination. Acts as an E3 ubiquitin-protein ligase. Promotes SMAD4 ubiquitination, nuclear exclusion and degradation via the ubiquitin proteasome pathway. May act as a transcriptional repressor. Inhibits the transcriptional response to TGF-beta/BMP signaling cascade. Plays a role in the control of cell proliferation. Its association with SMAD2 and SMAD3 stimulates erythroid differentiation of hematopoietic stem/progenitor. Monoubiquitinates SMAD4 and acts as an inhibitor of SMAD4-dependent TGF-beta/BMP signaling cascade (Monoubiquitination of SMAD4 hampers its ability to form a stable complex with activated SMAD2/3 resulting in inhibition of TGF-beta/BMP signaling cascade). The chain is E3 ubiquitin-protein ligase TRIM33 (Trim33) from Mus musculus (Mouse).